A 228-amino-acid chain; its full sequence is L-ribulose-5-phosphate 4-epimerase UlaF (228 aa).

Substrate-binding positions include 26-27 (GN), 43-44 (SG), and 72-73 (SS). The Zn(2+) site is built by aspartate 74, histidine 93, and histidine 95. Catalysis depends on aspartate 118, which acts as the Proton donor/acceptor. Zn(2+) is bound at residue histidine 167. The active-site Proton donor/acceptor is tyrosine 225.

The protein belongs to the aldolase class II family. AraD/FucA subfamily. It depends on Zn(2+) as a cofactor.

It carries out the reaction L-ribulose 5-phosphate = D-xylulose 5-phosphate. Its pathway is cofactor degradation; L-ascorbate degradation; D-xylulose 5-phosphate from L-ascorbate: step 4/4. Catalyzes the isomerization of L-ribulose 5-phosphate to D-xylulose 5-phosphate. Is involved in the anaerobic L-ascorbate utilization. This chain is L-ribulose-5-phosphate 4-epimerase UlaF, found in Escherichia coli O8 (strain IAI1).